The primary structure comprises 64 residues: U6-theraphotoxin-Cg1a (64 aa).

Residues 1–20 (MTRKILAVLLVFTLVACNNA) form the signal peptide. The propeptide occupies 21-38 (EKYSETDVEDSPMIQERR). 3 cysteine pairs are disulfide-bonded: cysteine 39/cysteine 55, cysteine 46/cysteine 58, and cysteine 54/cysteine 63.

It belongs to the neurotoxin 36 family. 02 subfamily. As to expression, expressed by the venom gland.

The protein localises to the secreted. In terms of biological role, probable ion channel inhibitor. The polypeptide is U6-theraphotoxin-Cg1a (Chilobrachys guangxiensis (Chinese earth tiger tarantula)).